A 160-amino-acid polypeptide reads, in one-letter code: Cytochrome b6-f complex subunit 4 (160 aa).

A run of 3 helical transmembrane segments spans residues 36–56 (LLYV…ALAV), 95–115 (LLGV…PFIE), and 131–151 (TVFL…ALPL).

It belongs to the cytochrome b family. PetD subfamily. In terms of assembly, the 4 large subunits of the cytochrome b6-f complex are cytochrome b6, subunit IV (17 kDa polypeptide, PetD), cytochrome f and the Rieske protein, while the 4 small subunits are PetG, PetL, PetM and PetN. The complex functions as a dimer.

Its subcellular location is the cellular thylakoid membrane. In terms of biological role, component of the cytochrome b6-f complex, which mediates electron transfer between photosystem II (PSII) and photosystem I (PSI), cyclic electron flow around PSI, and state transitions. This chain is Cytochrome b6-f complex subunit 4, found in Nostoc punctiforme (strain ATCC 29133 / PCC 73102).